The primary structure comprises 356 residues: DNA polymerase IV (356 aa).

The region spanning 1–188 (MDTSRKIIHI…IPVTKFYGVG (188 aa)) is the UmuC domain. Asp11 and Asp106 together coordinate Mg(2+). Residue Glu107 is part of the active site.

This sequence belongs to the DNA polymerase type-Y family. Monomer. The cofactor is Mg(2+).

It is found in the cytoplasm. It carries out the reaction DNA(n) + a 2'-deoxyribonucleoside 5'-triphosphate = DNA(n+1) + diphosphate. In terms of biological role, poorly processive, error-prone DNA polymerase involved in untargeted mutagenesis. Copies undamaged DNA at stalled replication forks, which arise in vivo from mismatched or misaligned primer ends. These misaligned primers can be extended by PolIV. Exhibits no 3'-5' exonuclease (proofreading) activity. May be involved in translesional synthesis, in conjunction with the beta clamp from PolIII. The protein is DNA polymerase IV of Listeria innocua serovar 6a (strain ATCC BAA-680 / CLIP 11262).